The sequence spans 236 residues: 2-C-methyl-D-erythritol 4-phosphate cytidylyltransferase (236 aa).

Belongs to the IspD/TarI cytidylyltransferase family. IspD subfamily.

The enzyme catalyses 2-C-methyl-D-erythritol 4-phosphate + CTP + H(+) = 4-CDP-2-C-methyl-D-erythritol + diphosphate. It functions in the pathway isoprenoid biosynthesis; isopentenyl diphosphate biosynthesis via DXP pathway; isopentenyl diphosphate from 1-deoxy-D-xylulose 5-phosphate: step 2/6. Its function is as follows. Catalyzes the formation of 4-diphosphocytidyl-2-C-methyl-D-erythritol from CTP and 2-C-methyl-D-erythritol 4-phosphate (MEP). In Burkholderia cenocepacia (strain ATCC BAA-245 / DSM 16553 / LMG 16656 / NCTC 13227 / J2315 / CF5610) (Burkholderia cepacia (strain J2315)), this protein is 2-C-methyl-D-erythritol 4-phosphate cytidylyltransferase.